A 266-amino-acid polypeptide reads, in one-letter code: Type III pantothenate kinase (266 aa).

6 to 13 (DAGNTNIV) contributes to the ATP binding site. Substrate is bound by residues Tyr-100 and 107 to 110 (GADR). The active-site Proton acceptor is the Asp-109. Residue Asp-129 participates in K(+) binding. Residue Thr-132 coordinates ATP. A substrate-binding site is contributed by Thr-184.

The protein belongs to the type III pantothenate kinase family. In terms of assembly, homodimer. It depends on NH4(+) as a cofactor. The cofactor is K(+).

The protein resides in the cytoplasm. It carries out the reaction (R)-pantothenate + ATP = (R)-4'-phosphopantothenate + ADP + H(+). The protein operates within cofactor biosynthesis; coenzyme A biosynthesis; CoA from (R)-pantothenate: step 1/5. Its function is as follows. Catalyzes the phosphorylation of pantothenate (Pan), the first step in CoA biosynthesis. In Clostridium beijerinckii (strain ATCC 51743 / NCIMB 8052) (Clostridium acetobutylicum), this protein is Type III pantothenate kinase.